Here is a 24-residue protein sequence, read N- to C-terminus: Fibrinogen gamma chain (24 aa).

As to quaternary structure, heterohexamer; disulfide linked. Contains 2 sets of 3 non-identical chains (alpha, beta and gamma). The 2 heterotrimers are in head to head conformation with the N-termini in a small central domain. Post-translationally, conversion of fibrinogen to fibrin is triggered by thrombin, which cleaves fibrinopeptides A and B from alpha and beta chains, and thus exposes the N-terminal polymerization sites responsible for the formation of the soft clot. The soft clot is converted into the hard clot by factor XIIIA which catalyzes the epsilon-(gamma-glutamyl)lysine cross-linking between gamma chains (stronger) and between alpha chains (weaker) of different monomers.

Its subcellular location is the secreted. Its function is as follows. Together with fibrinogen alpha (FGA) and fibrinogen beta (FGB), polymerizes to form an insoluble fibrin matrix. Has a major function in hemostasis as one of the primary components of blood clots. In addition, functions during the early stages of wound repair to stabilize the lesion and guide cell migration during re-epithelialization. Was originally thought to be essential for platelet aggregation, based on in vitro studies using anticoagulated blood. However, subsequent studies have shown that it is not absolutely required for thrombus formation in vivo. Enhances expression of SELP in activated platelets via an ITGB3-dependent pathway. Maternal fibrinogen is essential for successful pregnancy. Fibrin deposition is also associated with infection, where it protects against IFNG-mediated hemorrhage. May also facilitate the antibacterial immune response via both innate and T-cell mediated pathways. This is Fibrinogen gamma chain (FGG) from Canis lupus familiaris (Dog).